A 1831-amino-acid polypeptide reads, in one-letter code: MVPSIHKTSNRYRTIYFFLISLLITSTFADQQAWPLPEEVSASQLHEIPVLHTAFVQIGEELHYLNHPIRPENVHQLPVYDSIKGVCEGNCPKEANKNHATKTFNVLKLSGKGKLPMEMDPPMMDFGQNSVGTAQKRKIYIRNMRNEQIFLDAVVVNSIEFQASYFEQYKLEPHGVTSLEVVFLPREIGKRSTIVHFYTSVGVFTYKMQGNCDSNPYRISPFTGYRLPMNSSISKPIVIFNPYAYTMRITEIGTSGGNAHIELPHEVDSKLAEEPLQYWDIRPYQSKQIATLVLVGATSENSTVFVRIGSEIYLSSEHRKPNTDIYLTVPIEVLKRRGVYATDEILDFGLIRQGMKSEAKVFSVVQYQIGGRLEFETLYVEKGDHTAIYMEFASHPPIIVYPPTKGSVTLGPKADLVKVYLEGNRVQMSPQQQMKHISGHIIAVSRGGNYNVSIPYRADVFRGDLLPIGNDLSIQEDLRPPHQRIIRIENQLPFDVAIFNITLAPELVSHFSVRLIDRTALIRSGHISPVFVLKYNKKLPPTFDNSTIYLHTNVSTFNLSLSTYTGRMNVELISVDKNSFDFGFVERNDTRTIRFVVWNHNRAEMRLKNLAVPHRSAYRLYEVGVKSIGNFSDVRNDERLEYVEATDVDIPPMKGKIFDLELKVPSDGVVRNGNIIFETDLESKIFGVTYQVSTGSLQSIPEEICFGQTFPSKLVYRTLQVFNSFDEDMTVTRLTTLNEDPRFFFEGFDPKNPPVLRSGRLTNLGRVMFSPSAPCEHDYCYLGLPLGSSDGAWFTHGLTLPSNLPEIDSYLYKQLRKKYDALVNSGKHHINTTIILDTDKAKNIKIKTSAELVWPRLLTRNSIHFPLTALGNFTIVNLTLANPTNVPVAIQVIPLVIYPDAESLVELMRPNLVSELTDHVEMNETLMFSLRDTELFTLKSDSPVPKLREAFEYHLNHEMPRYNNEINIPRFTLSMILKPHMKIRLRLGFLPSDYTLRSSLLLIRNNLTAIEPVVMYGKGARIGVKVEGAEARSKKPLLFEIRHDHLTDCNNPKRLMHKLHSTLTVRRPFQVMNSGEVQFTVTNMSINGVPCENRGFRILNCYPFRLQPNETYALDIAYTPDFLTTTNEADLQLYMHMNGSAWIFPLASTVPGDMLAKCHQALPRPPFENIMYYSCVTALIFCLVCVLACAYLEGDRAIAVAIRQQFAIPRHVFDLNNLNKNNSTTTPVPTVPSTAKPESSIKKPTPATRPSTLRASSDAWLISRLLIGLANFIVKCVHLFWKWSLFWRREKADDKQSKSAKVTKKKNPVTMQKVEEFRQMLEYVGQQKRQQNSGELAPEFDEVEEEELAEMWAQRKDSGAQSSVVTDPEPPMSKSQRKKKRAAQQKENNNLEAPIIVQPVVQSPPVQNKMEPAKKTTPGPSPKPKGNNQRKKHVQVPPVTKTPVTPKTSIPPPTEPEKPIKPSEQKKPNAIPVERPKQPTPSKARTPSKTPSQSNRAQHPASSPAPIAPTSAPTDDFVHVPPTSLTSPDLFYRQFLSSMGMPMDAGMWDTPAAQAAMPFMNLWNYGGPLSAEQMEDLIRQASGVAPITNDSEGTTVTTPSDIGMTWGTSGHLGGDEESIGGEAAPDWIDEDVNVDDAEMDFSSMSAASKDIFKDDDIDNFNQQMKRQRSPSQASSTLSRKLENSPQKMGSRRLTIGSEKKNNQSSSSALNPNYDFTRTPGNPNRMQMSQNSIQPAPPATSIWGDNSNSDPWGTNTVSNPLSELEDDPLSLSHLGINLASTESSATGPMFTMFSGPEFNLWSSSSLFHPPTQQPSTSQMPQDTDNENDEKNN.

The N-terminal stretch at methionine 1–alanine 29 is a signal peptide. The Lumenal portion of the chain corresponds to aspartate 30–asparagine 1169. The segment at glutamate 118–leucine 294 is papD-L domain. The chain crosses the membrane as a helical span at residues isoleucine 1170 to alanine 1190. Topologically, residues tyrosine 1191 to asparagine 1831 are cytoplasmic. The span at serine 1223–threonine 1234 shows a compositional bias: low complexity. 4 disordered regions span residues serine 1223–threonine 1252, glycine 1325–aspartate 1516, glutamine 1663–proline 1759, and tryptophan 1800–asparagine 1831. The span at proline 1338–alanine 1349 shows a compositional bias: acidic residues. Composition is skewed to low complexity over residues proline 1394–glutamine 1407 and glutamine 1435–threonine 1448. Residues glutamate 1455–lysine 1467 show a composition bias toward basic and acidic residues. Polar residues predominate over residues threonine 1480 to alanine 1497. A compositionally biased stretch (low complexity) spans proline 1500–threonine 1514. Composition is skewed to polar residues over residues serine 1669–lysine 1687, asparagine 1702–glutamine 1733, and tryptophan 1742–asparagine 1758. The segment covering proline 1808–glutamine 1820 has biased composition (low complexity). The span at threonine 1822 to asparagine 1831 shows a compositional bias: acidic residues.

It belongs to the TMEM131 family. May interact (via PapD-L domain) with collagen proteins (via C-terminus); the interaction is direct and is involved in assembly and secretion of collagen. In terms of tissue distribution, predominantly expressed in the intestine and hypodermis.

Its subcellular location is the membrane. It is found in the endoplasmic reticulum membrane. Collagen binding transmembrane protein involved in collagen secretion, probably by recruiting the ER-to-Golgi transport complex TRAPPIII. Required for normal development. In Caenorhabditis elegans, this protein is Transmembrane protein 131 homolog.